The following is a 354-amino-acid chain: Trans-L-3-hydroxyproline dehydratase (354 aa).

Cysteine 104 functions as the Proton acceptor in the catalytic mechanism. Substrate contacts are provided by residues 105–106 (GH), aspartate 269, and 274–275 (GS).

Belongs to the proline racemase family. Homodimer.

It carries out the reaction trans-3-hydroxy-L-proline = 1-pyrroline-2-carboxylate + H2O. Its function is as follows. Catalyzes the dehydration of trans-3-hydroxy-L-proline to delta-1-pyrroline-2-carboxylate (Pyr2C). The polypeptide is Trans-L-3-hydroxyproline dehydratase (L3HYPDH) (Pongo abelii (Sumatran orangutan)).